The following is a 396-amino-acid chain: Chorismate synthase (396 aa).

The NADP(+) site is built by Arg-41 and Arg-47. FMN is bound by residues 130–132 (RAS), Gly-298, 313–317 (KPIPT), and Arg-339.

Belongs to the chorismate synthase family. Homotetramer. Requires FMNH2 as cofactor.

The catalysed reaction is 5-O-(1-carboxyvinyl)-3-phosphoshikimate = chorismate + phosphate. The protein operates within metabolic intermediate biosynthesis; chorismate biosynthesis; chorismate from D-erythrose 4-phosphate and phosphoenolpyruvate: step 7/7. Its function is as follows. Catalyzes the anti-1,4-elimination of the C-3 phosphate and the C-6 proR hydrogen from 5-enolpyruvylshikimate-3-phosphate (EPSP) to yield chorismate, which is the branch point compound that serves as the starting substrate for the three terminal pathways of aromatic amino acid biosynthesis. This reaction introduces a second double bond into the aromatic ring system. The protein is Chorismate synthase of Syntrophomonas wolfei subsp. wolfei (strain DSM 2245B / Goettingen).